The following is a 162-amino-acid chain: uncharacterized protein (162 aa).

This sequence belongs to the M.jannaschii MJ0150/MJ0739/MJ0745/MJ1460/MJ1642 family.

This is an uncharacterized protein from Methanocaldococcus jannaschii (strain ATCC 43067 / DSM 2661 / JAL-1 / JCM 10045 / NBRC 100440) (Methanococcus jannaschii).